A 301-amino-acid chain; its full sequence is Acetylglutamate kinase (301 aa).

Residues 71–72, Arg93, and Asn198 each bind substrate; that span reads GG.

The protein belongs to the acetylglutamate kinase family. ArgB subfamily.

It is found in the cytoplasm. The enzyme catalyses N-acetyl-L-glutamate + ATP = N-acetyl-L-glutamyl 5-phosphate + ADP. It functions in the pathway amino-acid biosynthesis; L-arginine biosynthesis; N(2)-acetyl-L-ornithine from L-glutamate: step 2/4. Catalyzes the ATP-dependent phosphorylation of N-acetyl-L-glutamate. The sequence is that of Acetylglutamate kinase from Rhizorhabdus wittichii (strain DSM 6014 / CCUG 31198 / JCM 15750 / NBRC 105917 / EY 4224 / RW1) (Sphingomonas wittichii).